A 218-amino-acid polypeptide reads, in one-letter code: 3-dehydroquinate dehydratase (218 aa).

3-dehydroquinate-binding positions include 29 to 31 and arginine 56; that span reads EFR. The active-site Proton donor/acceptor is the histidine 116. The Schiff-base intermediate with substrate role is filled by lysine 142. The 3-dehydroquinate site is built by arginine 180, serine 200, and glutamine 204.

It belongs to the type-I 3-dehydroquinase family. In terms of assembly, homodimer.

The catalysed reaction is 3-dehydroquinate = 3-dehydroshikimate + H2O. It participates in metabolic intermediate biosynthesis; chorismate biosynthesis; chorismate from D-erythrose 4-phosphate and phosphoenolpyruvate: step 3/7. Involved in the third step of the chorismate pathway, which leads to the biosynthesis of aromatic amino acids. Catalyzes the cis-dehydration of 3-dehydroquinate (DHQ) and introduces the first double bond of the aromatic ring to yield 3-dehydroshikimate. This Methanococcus maripaludis (strain C7 / ATCC BAA-1331) protein is 3-dehydroquinate dehydratase.